The following is a 265-amino-acid chain: 5'-nucleotidase SurE (265 aa).

Residues D8, D9, S41, and N100 each coordinate a divalent metal cation.

Belongs to the SurE nucleotidase family. Requires a divalent metal cation as cofactor.

The protein resides in the cytoplasm. It carries out the reaction a ribonucleoside 5'-phosphate + H2O = a ribonucleoside + phosphate. Functionally, nucleotidase that shows phosphatase activity on nucleoside 5'-monophosphates. The polypeptide is 5'-nucleotidase SurE (Brevibacillus brevis (strain 47 / JCM 6285 / NBRC 100599)).